Here is a 309-residue protein sequence, read N- to C-terminus: 4-hydroxy-tetrahydrodipicolinate synthase (309 aa).

Thr51 is a pyruvate binding site. Residue Tyr140 is the Proton donor/acceptor of the active site. Lys168 functions as the Schiff-base intermediate with substrate in the catalytic mechanism. Residue Ile209 participates in pyruvate binding.

This sequence belongs to the DapA family. As to quaternary structure, homotetramer; dimer of dimers.

The protein localises to the cytoplasm. The enzyme catalyses L-aspartate 4-semialdehyde + pyruvate = (2S,4S)-4-hydroxy-2,3,4,5-tetrahydrodipicolinate + H2O + H(+). It participates in amino-acid biosynthesis; L-lysine biosynthesis via DAP pathway; (S)-tetrahydrodipicolinate from L-aspartate: step 3/4. Its function is as follows. Catalyzes the condensation of (S)-aspartate-beta-semialdehyde [(S)-ASA] and pyruvate to 4-hydroxy-tetrahydrodipicolinate (HTPA). The sequence is that of 4-hydroxy-tetrahydrodipicolinate synthase from Streptococcus uberis (strain ATCC BAA-854 / 0140J).